We begin with the raw amino-acid sequence, 261 residues long: Cytochrome c oxidase subunit 3 (261 aa).

The Mitochondrial matrix portion of the chain corresponds to 1 to 15; that stretch reads MTHQAHAYHMVDPSP. A helical transmembrane segment spans residues 16 to 34; the sequence is WPLTGAVAALLMTSGLAVW. Topologically, residues 35–40 are mitochondrial intermembrane; sequence FHFHST. A helical transmembrane segment spans residues 41–66; that stretch reads TLMALGTVLLLLTMYQWWRDIIREGT. Topologically, residues 67 to 72 are mitochondrial matrix; the sequence is FQGHHT. The chain crosses the membrane as a helical span at residues 73–105; the sequence is PPVQKGLRYGMILFITSEVFFFLGFFWAFYHAS. The Mitochondrial intermembrane segment spans residues 106–128; it reads LAPTPELGGCWPPTGITTLDPFE. A helical transmembrane segment spans residues 129-152; it reads VPLLNTAVLLASGVTVTWAHHSIM. The Mitochondrial matrix portion of the chain corresponds to 153 to 155; that stretch reads EGE. A helical transmembrane segment spans residues 156-183; it reads RKQAIHSLTLTILLGFYFTFLQGLEYYD. The Mitochondrial intermembrane portion of the chain corresponds to 184-190; the sequence is APFTIAD. The chain crosses the membrane as a helical span at residues 191-223; the sequence is GVYGSTFFVATGFHGLHVIIGSTFLAVCLLRQI. Topologically, residues 224–232 are mitochondrial matrix; it reads RYHFTSEHH. A helical membrane pass occupies residues 233–256; sequence FGFEAAAWYWHFVDVVWLFLYISI. The Mitochondrial intermembrane portion of the chain corresponds to 257–261; it reads YWWGS.

Belongs to the cytochrome c oxidase subunit 3 family. Component of the cytochrome c oxidase (complex IV, CIV), a multisubunit enzyme composed of 14 subunits. The complex is composed of a catalytic core of 3 subunits MT-CO1, MT-CO2 and MT-CO3, encoded in the mitochondrial DNA, and 11 supernumerary subunits COX4I, COX5A, COX5B, COX6A, COX6B, COX6C, COX7A, COX7B, COX7C, COX8 and NDUFA4, which are encoded in the nuclear genome. The complex exists as a monomer or a dimer and forms supercomplexes (SCs) in the inner mitochondrial membrane with NADH-ubiquinone oxidoreductase (complex I, CI) and ubiquinol-cytochrome c oxidoreductase (cytochrome b-c1 complex, complex III, CIII), resulting in different assemblies (supercomplex SCI(1)III(2)IV(1) and megacomplex MCI(2)III(2)IV(2)).

Its subcellular location is the mitochondrion inner membrane. It carries out the reaction 4 Fe(II)-[cytochrome c] + O2 + 8 H(+)(in) = 4 Fe(III)-[cytochrome c] + 2 H2O + 4 H(+)(out). Functionally, component of the cytochrome c oxidase, the last enzyme in the mitochondrial electron transport chain which drives oxidative phosphorylation. The respiratory chain contains 3 multisubunit complexes succinate dehydrogenase (complex II, CII), ubiquinol-cytochrome c oxidoreductase (cytochrome b-c1 complex, complex III, CIII) and cytochrome c oxidase (complex IV, CIV), that cooperate to transfer electrons derived from NADH and succinate to molecular oxygen, creating an electrochemical gradient over the inner membrane that drives transmembrane transport and the ATP synthase. Cytochrome c oxidase is the component of the respiratory chain that catalyzes the reduction of oxygen to water. Electrons originating from reduced cytochrome c in the intermembrane space (IMS) are transferred via the dinuclear copper A center (CU(A)) of subunit 2 and heme A of subunit 1 to the active site in subunit 1, a binuclear center (BNC) formed by heme A3 and copper B (CU(B)). The BNC reduces molecular oxygen to 2 water molecules using 4 electrons from cytochrome c in the IMS and 4 protons from the mitochondrial matrix. The sequence is that of Cytochrome c oxidase subunit 3 (mt-co3) from Gadus morhua (Atlantic cod).